The chain runs to 158 residues: C-type natriuretic peptide 3 (158 aa).

The first 21 residues, Met-1–Ala-21, serve as a signal peptide directing secretion. A propeptide spanning residues Lys-22–Lys-136 is cleaved from the precursor. Positions Pro-32–Gly-95 are disordered. Residues Val-47–Glu-64 are compositionally biased toward basic and acidic residues. Over residues Gln-65–Glu-86 the composition is skewed to acidic residues. The cysteines at positions 142 and 158 are disulfide-linked.

It belongs to the natriuretic peptide family.

The protein resides in the secreted. Functionally, exhibits natriuretic and vasodepressant activity. Has cGMP-stimulating activity. May help to regulate body fluid homeostasis in a variety of aquatic environments. The protein is C-type natriuretic peptide 3 of Takifugu rubripes (Japanese pufferfish).